Reading from the N-terminus, the 155-residue chain is Phosphopantetheine adenylyltransferase (155 aa).

Belongs to the eukaryotic CoaD family.

It localises to the cytoplasm. The catalysed reaction is (R)-4'-phosphopantetheine + ATP + H(+) = 3'-dephospho-CoA + diphosphate. It functions in the pathway cofactor biosynthesis; coenzyme A biosynthesis. Functionally, reversibly transfers an adenylyl group from ATP to 4'-phosphopantetheine, yielding dephospho-CoA (dPCoA) and pyrophosphate. The protein is Phosphopantetheine adenylyltransferase of Pyrobaculum aerophilum (strain ATCC 51768 / DSM 7523 / JCM 9630 / CIP 104966 / NBRC 100827 / IM2).